Reading from the N-terminus, the 403-residue chain is Tryptophan synthase beta chain (403 aa).

The residue at position 93 (Lys93) is an N6-(pyridoxal phosphate)lysine.

It belongs to the TrpB family. As to quaternary structure, tetramer of two alpha and two beta chains. The cofactor is pyridoxal 5'-phosphate.

It catalyses the reaction (1S,2R)-1-C-(indol-3-yl)glycerol 3-phosphate + L-serine = D-glyceraldehyde 3-phosphate + L-tryptophan + H2O. It participates in amino-acid biosynthesis; L-tryptophan biosynthesis; L-tryptophan from chorismate: step 5/5. Functionally, the beta subunit is responsible for the synthesis of L-tryptophan from indole and L-serine. The polypeptide is Tryptophan synthase beta chain (Acinetobacter baylyi (strain ATCC 33305 / BD413 / ADP1)).